We begin with the raw amino-acid sequence, 228 residues long: ATP synthase F(0) complex subunit a (228 aa).

The next 6 helical transmembrane spans lie at Tyr13–Ile33, Trp70–Leu90, Leu100–Thr120, Ala140–Val160, Leu162–Asn182, and Leu190–Ile210.

It belongs to the ATPase A chain family. In terms of assembly, component of the ATP synthase complex composed at least of ATP5F1A/subunit alpha, ATP5F1B/subunit beta, ATP5MC1/subunit c (homooctomer), MT-ATP6/subunit a, MT-ATP8/subunit 8, ATP5ME/subunit e, ATP5MF/subunit f, ATP5MG/subunit g, ATP5MK/subunit k, ATP5MJ/subunit j, ATP5F1C/subunit gamma, ATP5F1D/subunit delta, ATP5F1E/subunit epsilon, ATP5PF/subunit F6, ATP5PB/subunit b, ATP5PD/subunit d, ATP5PO/subunit OSCP. ATP synthase complex consists of a soluble F(1) head domain (subunits alpha(3) and beta(3)) - the catalytic core - and a membrane F(0) domain - the membrane proton channel (subunits c, a, 8, e, f, g, k and j). These two domains are linked by a central stalk (subunits gamma, delta, and epsilon) rotating inside the F1 region and a stationary peripheral stalk (subunits F6, b, d, and OSCP). Interacts with DNAJC30; interaction is direct.

It localises to the mitochondrion inner membrane. The catalysed reaction is H(+)(in) = H(+)(out). Subunit a, of the mitochondrial membrane ATP synthase complex (F(1)F(0) ATP synthase or Complex V) that produces ATP from ADP in the presence of a proton gradient across the membrane which is generated by electron transport complexes of the respiratory chain. ATP synthase complex consist of a soluble F(1) head domain - the catalytic core - and a membrane F(1) domain - the membrane proton channel. These two domains are linked by a central stalk rotating inside the F(1) region and a stationary peripheral stalk. During catalysis, ATP synthesis in the catalytic domain of F(1) is coupled via a rotary mechanism of the central stalk subunits to proton translocation. With the subunit c (ATP5MC1), forms the proton-conducting channel in the F(0) domain, that contains two crucial half-channels (inlet and outlet) that facilitate proton movement from the mitochondrial intermembrane space (IMS) into the matrix. Protons are taken up via the inlet half-channel and released through the outlet half-channel, following a Grotthuss mechanism. This chain is ATP synthase F(0) complex subunit a, found in Myxine glutinosa (Atlantic hagfish).